Reading from the N-terminus, the 670-residue chain is Segment polarity protein dishevelled homolog DVL-1 (670 aa).

The region spanning 1-85 is the DIX domain; it reads MAETKIIYHM…RVVSWLVLAE (85 aa). A disordered region spans residues 89 to 237; the sequence is SDAGSQGTDS…LRQADRASSF (149 aa). Residues 142 to 151 show a composition bias toward basic residues; that stretch reads SHRRERARRR. Basic and acidic residues predominate over residues 152-171; sequence NREEAARTNGHPRGDRRRDV. Residues 176 to 192 show a composition bias toward low complexity; that stretch reads DSASTALSSELESSSFV. Phosphoserine is present on Ser194. The span at 200-214 shows a compositional bias: low complexity; that stretch reads TSRLSSSTEQSTSSR. The segment covering 215–228 has biased composition (basic residues); the sequence is LIRKHKRRRRKQRL. Residues 251-323 form the PDZ domain; sequence TVTLNMERHH…NDDAVRVLRE (73 aa). Residues 400–474 enclose the DEP domain; that stretch reads PDSGLEIRDR…SEQCYYVFGD (75 aa). The interval 518–642 is disordered; it reads PGPPPCFPPA…PGGPPVRELA (125 aa). Residues 526 to 555 are compositionally biased toward low complexity; that stretch reads PAYQDPGFSYGSGSTGSQQSEGSKSSGSTR. Over residues 600–611 the composition is skewed to polar residues; the sequence is SRGSSPRSQASA.

It belongs to the DSH family. In terms of assembly, interacts with CXXC4. Interacts (via PDZ domain) with NXN. Interacts with BRD7 and INVS. Interacts (via PDZ domain) with VANGL1 and VANGL2 (via C-terminus). Interacts with ARRB1; the interaction is enhanced by phosphorylation of DVL1. Interacts with CYLD. Interacts (via PDZ domain) with RYK. Self-associates (via DIX domain) and forms higher homooligomers. Interacts (via PDZ domain) with DACT1 and FZD7, where DACT1 and FZD7 compete for the same binding site. Interacts (via DEP domain) with MUSK; the interaction is direct and mediates the formation a DVL1, MUSK and PAK1 ternary complex involved in AChR clustering. Interacts (via PDZ domain) with TMEM88. Interacts with DCDC2. Interacts with FOXK2. Interacts with PKD1 (via extracellular domain). Interacts (via PDZ domain) with CCDC88C/DAPLE; competes with CCDC88C for binding to frizzled receptor FZD7 and dissociates from CCDC88C following initiation of non-canonical Wnt signaling when CCDC88C displaces DVL1 from ligand-activated FZD7. Ubiquitinated; undergoes both 'Lys-48'-linked ubiquitination, leading to its subsequent degradation by the ubiquitin-proteasome pathway, and 'Lys-63'-linked ubiquitination. The interaction with INVS is required for ubiquitination. Deubiquitinated by CYLD, which acts on 'Lys-63'-linked ubiquitin chains.

The protein resides in the cell membrane. It localises to the cytoplasm. The protein localises to the cytosol. It is found in the cytoplasmic vesicle. Functionally, participates in Wnt signaling by binding to the cytoplasmic C-terminus of frizzled family members and transducing the Wnt signal to down-stream effectors. Plays a role both in canonical and non-canonical Wnt signaling. Plays a role in the signal transduction pathways mediated by multiple Wnt genes. Required for LEF1 activation upon WNT1 and WNT3A signaling. DVL1 and PAK1 form a ternary complex with MUSK which is important for MUSK-dependent regulation of AChR clustering during the formation of the neuromuscular junction (NMJ). This chain is Segment polarity protein dishevelled homolog DVL-1 (DVL1), found in Pan troglodytes (Chimpanzee).